Consider the following 469-residue polypeptide: Probable ribonuclease FAU-1 (469 aa).

It belongs to the FAU-1 family.

Functionally, probable RNase involved in rRNA stability through maturation and/or degradation of precursor rRNAs. Binds to RNA in loop regions with AU-rich sequences. The polypeptide is Probable ribonuclease FAU-1 (Pyrococcus abyssi (strain GE5 / Orsay)).